We begin with the raw amino-acid sequence, 132 residues long: D-ribose pyranase (132 aa).

Catalysis depends on His-20, which acts as the Proton donor. Substrate contacts are provided by residues Asp-28, His-99, and Tyr-121 to Asn-123.

Belongs to the RbsD / FucU family. RbsD subfamily. Homodecamer.

Its subcellular location is the cytoplasm. It catalyses the reaction beta-D-ribopyranose = beta-D-ribofuranose. The protein operates within carbohydrate metabolism; D-ribose degradation; D-ribose 5-phosphate from beta-D-ribopyranose: step 1/2. In terms of biological role, catalyzes the interconversion of beta-pyran and beta-furan forms of D-ribose. This is D-ribose pyranase from Pseudomonas putida (strain W619).